Reading from the N-terminus, the 294-residue chain is 4-hydroxy-tetrahydrodipicolinate synthase (294 aa).

Threonine 47 lines the pyruvate pocket. Tyrosine 135 acts as the Proton donor/acceptor in catalysis. The active-site Schiff-base intermediate with substrate is lysine 163. Position 205 (threonine 205) interacts with pyruvate.

Belongs to the DapA family. As to quaternary structure, homotetramer; dimer of dimers.

It localises to the cytoplasm. The catalysed reaction is L-aspartate 4-semialdehyde + pyruvate = (2S,4S)-4-hydroxy-2,3,4,5-tetrahydrodipicolinate + H2O + H(+). The protein operates within amino-acid biosynthesis; L-lysine biosynthesis via DAP pathway; (S)-tetrahydrodipicolinate from L-aspartate: step 3/4. Its function is as follows. Catalyzes the condensation of (S)-aspartate-beta-semialdehyde [(S)-ASA] and pyruvate to 4-hydroxy-tetrahydrodipicolinate (HTPA). This is 4-hydroxy-tetrahydrodipicolinate synthase from Rickettsia rickettsii.